Reading from the N-terminus, the 349-residue chain is Magnesium-protoporphyrin IX monomethyl ester [oxidative] cyclase (349 aa).

Positions 1–22 (MTATASASSVSGSLGRNELPPH) are disordered.

The protein belongs to the AcsF family. The cofactor is Fe cation.

The catalysed reaction is Mg-protoporphyrin IX 13-monomethyl ester + 3 NADPH + 3 O2 + 2 H(+) = 3,8-divinyl protochlorophyllide a + 3 NADP(+) + 5 H2O. The protein operates within porphyrin-containing compound metabolism; chlorophyll biosynthesis (light-independent). Functionally, catalyzes the formation of the isocyclic ring in chlorophyll biosynthesis. Mediates the cyclase reaction, which results in the formation of divinylprotochlorophyllide (Pchlide) characteristic of all chlorophylls from magnesium-protoporphyrin IX 13-monomethyl ester (MgPMME). This is Magnesium-protoporphyrin IX monomethyl ester [oxidative] cyclase from Prochlorococcus marinus (strain MIT 9211).